The sequence spans 178 residues: Riboflavin kinase (178 aa).

T39 and N41 together coordinate Mg(2+). E116 functions as the Nucleophile in the catalytic mechanism.

This sequence belongs to the flavokinase family. The cofactor is Zn(2+). Mg(2+) is required as a cofactor.

The enzyme catalyses riboflavin + ATP = FMN + ADP + H(+). Its pathway is cofactor biosynthesis; FMN biosynthesis; FMN from riboflavin (ATP route): step 1/1. Functionally, catalyzes the phosphorylation of riboflavin (vitamin B2) to form flavin mononucleotide (FMN) coenzyme. The sequence is that of Riboflavin kinase (FMN1) from Scheffersomyces stipitis (strain ATCC 58785 / CBS 6054 / NBRC 10063 / NRRL Y-11545) (Yeast).